A 135-amino-acid polypeptide reads, in one-letter code: MSVRRIAIRCLNYGKPQNPAYNASSSMRIEPIKRTGETRETKKARLVYQSRKRGILESDLLLSRFAKKHLDSLSDSQLDEYDQLLDEPDWDIYYWATKNYDVTPLPDRWKDSEILKMLQKDAQNEDREIMRMPEL.

It belongs to the SDHAF2 family. In terms of assembly, interacts with the flavoprotein subunit within the SDH catalytic dimer.

It is found in the mitochondrion matrix. Functionally, plays an essential role in the assembly of succinate dehydrogenase (SDH), an enzyme complex (also referred to as respiratory complex II) that is a component of both the tricarboxylic acid (TCA) cycle and the mitochondrial electron transport chain, and which couples the oxidation of succinate to fumarate with the reduction of ubiquinone (coenzyme Q) to ubiquinol. Required for flavinylation (covalent attachment of FAD) of the flavoprotein subunit of the SDH catalytic dimer. The polypeptide is Succinate dehydrogenase assembly factor 2, mitochondrial (Meyerozyma guilliermondii (strain ATCC 6260 / CBS 566 / DSM 6381 / JCM 1539 / NBRC 10279 / NRRL Y-324) (Yeast)).